The sequence spans 310 residues: Cytosolic Fe-S cluster assembly factor NUBP1 homolog (310 aa).

Cysteine 12, cysteine 26, cysteine 29, and cysteine 35 together coordinate [4Fe-4S] cluster. An ATP-binding site is contributed by 66 to 73; sequence GKGGVGKS. [4Fe-4S] cluster-binding residues include cysteine 240 and cysteine 243.

It belongs to the Mrp/NBP35 ATP-binding proteins family. NUBP1/NBP35 subfamily. In terms of assembly, heterotetramer of 2 NUBP1 and 2 NUBP2 chains. [4Fe-4S] cluster serves as cofactor.

The protein localises to the cytoplasm. Component of the cytosolic iron-sulfur (Fe/S) protein assembly (CIA) machinery. Required for maturation of extramitochondrial Fe-S proteins. The NUBP1-NUBP2 heterotetramer forms a Fe-S scaffold complex, mediating the de novo assembly of an Fe-S cluster and its transfer to target apoproteins. The sequence is that of Cytosolic Fe-S cluster assembly factor NUBP1 homolog from Brugia malayi (Filarial nematode worm).